The following is a 447-amino-acid chain: GTPase Der (447 aa).

2 consecutive EngA-type G domains span residues 2–166 (YRVA…PEYE) and 183–358 (IKVA…NQSW). GTP is bound by residues 8–15 (GRPNVGKS), 55–59 (DTGGY), 118–121 (NKID), 189–196 (GKPNAGKS), 236–240 (DTAGL), and 301–304 (NKID). Residues 359 to 443 (KRVGTGQLNR…PIKLLLRGKE (85 aa)) enclose the KH-like domain.

Belongs to the TRAFAC class TrmE-Era-EngA-EngB-Septin-like GTPase superfamily. EngA (Der) GTPase family. As to quaternary structure, associates with the 50S ribosomal subunit.

GTPase that plays an essential role in the late steps of ribosome biogenesis. The sequence is that of GTPase Der from Persephonella marina (strain DSM 14350 / EX-H1).